Reading from the N-terminus, the 317-residue chain is Dehydrogenase/reductase SDR family member 12 (317 aa).

The NAD(+) site is built by serine 50 and isoleucine 52. Position 175 (serine 175) interacts with substrate. The NAD(+) site is built by tyrosine 201, lysine 205, and threonine 234. The Proton acceptor role is filled by tyrosine 201.

Belongs to the short-chain dehydrogenases/reductases (SDR) family.

Its function is as follows. Putative oxidoreductase. The sequence is that of Dehydrogenase/reductase SDR family member 12 (DHRS12) from Bos taurus (Bovine).